A 122-amino-acid polypeptide reads, in one-letter code: Serum amyloid A-3 protein (122 aa).

Positions 1–18 are cleaved as a signal peptide; sequence MKLSIGIIFCFLILGVNS. The segment at 88 to 122 is disordered; that stretch reads GRGAEDSKADQEANQWGRSGNDPNHFRPKGLPDKY. A compositionally biased stretch (polar residues) spans 99-109; that stretch reads EANQWGRSGND.

Belongs to the SAA family. In terms of tissue distribution, expressed by the liver; secreted in plasma. Expressed in synovial fibroblasts.

The protein resides in the secreted. Its function is as follows. Major acute phase reactant. Apolipoprotein of the HDL complex. In vitro exhibits antimicrobial activity against Escherichia coli, Streptococcus uberis and Pseudomonas aeruginosa. The protein is Serum amyloid A-3 protein (SAA3) of Oryctolagus cuniculus (Rabbit).